Here is a 297-residue protein sequence, read N- to C-terminus: TGF-beta receptor type-2 (297 aa).

The signal sequence occupies residues Met1–Thr23. Residues Ile24–Gln166 lie on the Extracellular side of the membrane. Cystine bridges form between Cys51/Cys84, Cys54/Cys71, Cys61/Cys67, Cys77/Cys101, Cys121/Cys136, and Cys138/Cys143. Residues Asn70 and Asn94 are each glycosylated (N-linked (GlcNAc...) asparagine). A helical transmembrane segment spans residues Val167 to Tyr187. The Cytoplasmic portion of the chain corresponds to Cys188–Leu297. The Protein kinase domain occupies Ile244–Leu297. ATP contacts are provided by residues Val250 to Val258 and Lys277.

It belongs to the protein kinase superfamily. TKL Ser/Thr protein kinase family. TGFB receptor subfamily. As to quaternary structure, homodimer. Heterohexamer; TGFB1, TGFB2 and TGFB3 homodimeric ligands assemble a functional receptor composed of two TGFBR1 and TGFBR2 heterodimers to form a ligand-receptor heterohexamer. The respective affinity of TGFRB1 and TGFRB2 for the ligands may modulate the kinetics of assembly of the receptor and may explain the different biological activities of TGFB1, TGFB2 and TGFB3. Component of a complex composed of TSC22D1 (via N-terminus), TGFBR1 and TGFBR2; the interaction between TSC22D1 and TGFBR1 is inhibited by SMAD7 and promoted by TGFB1. Interacts with DAXX. Interacts with DYNLT4. Interacts with ZFYVE9; ZFYVE9 recruits SMAD2 and SMAD3 to the TGF-beta receptor. Interacts with and is activated by SCUBE3; this interaction does not affect TGFB1-binding to TGFBR2. Interacts with VPS39; this interaction is independent of the receptor kinase activity and of the presence of TGF-beta. Interacts with CLU. Mg(2+) is required as a cofactor. The cofactor is Mn(2+). In terms of processing, phosphorylated on a Ser/Thr residue in the cytoplasmic domain.

The protein localises to the cell membrane. The protein resides in the membrane raft. It catalyses the reaction L-threonyl-[receptor-protein] + ATP = O-phospho-L-threonyl-[receptor-protein] + ADP + H(+). The enzyme catalyses L-seryl-[receptor-protein] + ATP = O-phospho-L-seryl-[receptor-protein] + ADP + H(+). Its function is as follows. Transmembrane serine/threonine kinase forming with the TGF-beta type I serine/threonine kinase receptor, TGFBR1, the non-promiscuous receptor for the TGF-beta cytokines TGFB1, TGFB2 and TGFB3. Transduces the TGFB1, TGFB2 and TGFB3 signal from the cell surface to the cytoplasm and is thus regulating a plethora of physiological and pathological processes including cell cycle arrest in epithelial and hematopoietic cells, control of mesenchymal cell proliferation and differentiation, wound healing, extracellular matrix production, immunosuppression and carcinogenesis. The formation of the receptor complex composed of 2 TGFBR1 and 2 TGFBR2 molecules symmetrically bound to the cytokine dimer results in the phosphorylation and the activation of TGFRB1 by the constitutively active TGFBR2. Activated TGFBR1 phosphorylates SMAD2 which dissociates from the receptor and interacts with SMAD4. The SMAD2-SMAD4 complex is subsequently translocated to the nucleus where it modulates the transcription of the TGF-beta-regulated genes. This constitutes the canonical SMAD-dependent TGF-beta signaling cascade. Also involved in non-canonical, SMAD-independent TGF-beta signaling pathways. The sequence is that of TGF-beta receptor type-2 (TGFBR2) from Sus scrofa (Pig).